The following is a 1286-amino-acid chain: CLIP-associating protein 2 (1286 aa).

A golgi localization region spans residues 1–40; that stretch reads MRRLICKRICDYKSFDDEESVDGNRPSSAASAFKVPAPKT. Residues serine 14 and serine 20 each carry the phosphoserine modification. A disordered region spans residues 17 to 70; sequence DEESVDGNRPSSAASAFKVPAPKTPGNPVNSARKPGSAGGPKAGGTSKEGGAGA. Residues 53–69 show a composition bias toward gly residues; sequence SAGGPKAGGTSKEGGAG. The tract at residues 66-317 is TOG 1; the sequence is GGAGAVDEDD…KSLQTYLKSS (252 aa). 3 HEAT repeats span residues 179-214, 215-251, and 256-293; these read HGAE…IRHT, HVPR…EWQT, and RHAA…HFPG. Disordered regions lie at residues 320-350 and 355-374; these read VASL…TANP and GRVS…LQRS. 3 positions are modified to phosphoserine: serine 322, serine 333, and serine 336. Over residues 322–340 the composition is skewed to low complexity; that stretch reads SLPQSDRSSSSSQESLNRP. Positions 341-350 are enriched in polar residues; that stretch reads FSSKWSTANP. Phosphoserine occurs at positions 374, 376, and 413. A disordered region spans residues 410–473; sequence SYASLEDTSD…GSRSGSPGRV (64 aa). Over residues 417–431 the composition is skewed to basic and acidic residues; that stretch reads TSDKMDGTASEDGRV. The interval 450 to 565 is interaction with microtubules, MAPRE1 and MAPRE3; sequence RGRSRTKMVS…GPGYGMSQSS (116 aa). The span at 459–473 shows a compositional bias: low complexity; that stretch reads SQSQPGSRSGSPGRV. Serine 461, serine 465, serine 469, serine 484, and serine 495 each carry phosphoserine. The interval 492 to 566 is disordered; the sequence is NSASAQKRSK…PGYGMSQSSR (75 aa). Residues 500–503 carry the SXIP motif 1; mediates interaction with MAPRE1 and targeting to microtubule plus ends motif; it reads SKIP. Serine 513 carries the phosphoserine modification. An SXIP motif 2; mediates interaction with MAPRE1 and targeting to microtubule plus ends motif is present at residues 523-526; that stretch reads SRIP. Serine 531, serine 535, serine 570, serine 572, serine 581, serine 614, and serine 620 each carry phosphoserine. Residues 606–616 are compositionally biased toward basic and acidic residues; sequence RYESYGMHSDD. Positions 606 to 638 are disordered; sequence RYESYGMHSDDDANSDASSACSERSYSSRNGSI. Over residues 620 to 634 the composition is skewed to low complexity; it reads SDASSACSERSYSSR. The interval 642–873 is TOG 2; that stretch reads MRQTEDVAEV…TKLLHNHLRN (232 aa). HEAT repeat units follow at residues 702–739 and 764–801; these read KVFS…KMGA and LQFN…QMDP. At threonine 779 the chain carries Phosphothreonine. The interval 864-1286 is interaction with RSN and localization to the Golgi and kinetochores; it reads TKLLHNHLRN…DPTTDVSGQS (423 aa). Disordered stretches follow at residues 870–920 and 944–990; these read HLRN…FDYD and SFRS…QPAL. Polar residues-rich tracts occupy residues 872–884 and 893–914; these read RNTG…SMGS and SPAN…TLSP. Position 884 is a phosphoserine (serine 884). Phosphoserine occurs at positions 944, 947, 1005, and 1021. Residues 947–964 are compositionally biased toward basic and acidic residues; sequence SQEDMSEPLKRDPKKEDG. Residues 1009-1286 form a required for cortical localization region; that stretch reads RDYNPYNYSD…DPTTDVSGQS (278 aa). HEAT repeat units lie at residues 1046–1083, 1090–1127, and 1208–1245; these read LDHS…TQEE, EHFK…HQPA, and LLLP…VIGD.

The protein belongs to the CLASP family. As to quaternary structure, interacts with microtubules. Interacts with MAPRE1; probably required for targeting to the growing microtubule plus ends. Interacts with CLIP2, ERC1, MAPRE3, PHLDB2 and RSN. The interaction with ERC1 may be mediated by PHLDB2. Interacts with GCC2; recruits CLASP2 to Golgi membranes. Interacts with MACF1. Interacts with SOGA1 and MTCL1. In terms of processing, phosphorylated by GSK3B. Phosphorylation by GSK3B may negatively regulate binding to microtubule lattices in lamella.

The protein resides in the cytoplasm. It localises to the cytoskeleton. It is found in the microtubule organizing center. Its subcellular location is the centrosome. The protein localises to the chromosome. The protein resides in the centromere. It localises to the kinetochore. It is found in the spindle. Its subcellular location is the golgi apparatus. The protein localises to the trans-Golgi network. The protein resides in the cell membrane. It localises to the cell projection. It is found in the ruffle membrane. Its subcellular location is the cell cortex. In terms of biological role, microtubule plus-end tracking protein that promotes the stabilization of dynamic microtubules. Involved in the nucleation of noncentrosomal microtubules originating from the trans-Golgi network (TGN). Required for the polarization of the cytoplasmic microtubule arrays in migrating cells towards the leading edge of the cell. May act at the cell cortex to enhance the frequency of rescue of depolymerizing microtubules by attaching their plus-ends to cortical platforms composed of ERC1 and PHLDB2. This cortical microtubule stabilizing activity is regulated at least in part by phosphatidylinositol 3-kinase signaling. Also performs a similar stabilizing function at the kinetochore which is essential for the bipolar alignment of chromosomes on the mitotic spindle. Acts as a mediator of ERBB2-dependent stabilization of microtubules at the cell cortex. This Rattus norvegicus (Rat) protein is CLIP-associating protein 2 (Clasp2).